A 166-amino-acid polypeptide reads, in one-letter code: Prorelaxin H2 (166 aa).

An N-terminal signal peptide occupies residues 1–5 (SRAVA). Intrachain disulfides connect cysteine 16–cysteine 153, cysteine 28–cysteine 166, and cysteine 152–cysteine 157. A propeptide spans 37–138 (SLSQEDAPQT…LKYLGLDTHS (102 aa)) (connecting peptide).

The protein belongs to the insulin family. Heterodimer of a B chain and an A chain linked by two disulfide bonds. Expressed in the corpus luteum of pregnancy and in the placenta.

It localises to the secreted. In terms of biological role, relaxin is an ovarian hormone that acts with estrogen to produce dilatation of the birth canal in many mammals. May be involved in remodeling of connective tissues during pregnancy, promoting growth of pubic ligaments and ripening of the cervix. This chain is Prorelaxin H2 (RNL2), found in Pan troglodytes (Chimpanzee).